Reading from the N-terminus, the 300-residue chain is Ribonuclease HIII (300 aa).

The RNase H type-2 domain maps to 83–300 (IPIIGSDEVG…THKAQALLTK (218 aa)). A divalent metal cation-binding residues include aspartate 89, glutamate 90, and aspartate 194.

It belongs to the RNase HII family. RnhC subfamily. It depends on Mn(2+) as a cofactor. Requires Mg(2+) as cofactor.

It localises to the cytoplasm. The catalysed reaction is Endonucleolytic cleavage to 5'-phosphomonoester.. Its function is as follows. Endonuclease that specifically degrades the RNA of RNA-DNA hybrids. The protein is Ribonuclease HIII of Streptococcus pyogenes serotype M1.